The following is a 306-amino-acid chain: Homeobox protein HMX3 (306 aa).

Positions 95–181 are disordered; it reads HTPRTEVPDK…DKKPCRKKKT (87 aa). Basic and acidic residues-rich tracts occupy residues 117 to 143 and 153 to 174; these read GERDSPEPIHPLKAELEAKDSESKSPE and EEGKKDDSGEDWKKREESPDKK. The segment at residues 178-237 is a DNA-binding region (homeobox); the sequence is KKKTRTVFSRSQVFQLESTFDMKRYLSSSERAGLAASLHLTETQVKIWFQNRRNKWKRQL.

It belongs to the HMX homeobox family.

It localises to the nucleus. Functionally, transcription factor involved in specification of neuronal cell types and which is required for inner ear and hypothalamus development. Binds to the 5'-CAAGTG-3' core sequence. May act as a stage-specific inhibitor of anf1 in the anterior neural plate during the development. This Xenopus tropicalis (Western clawed frog) protein is Homeobox protein HMX3 (hmx3).